Here is a 499-residue protein sequence, read N- to C-terminus: Potassium voltage-gated channel subfamily A member 2 (499 aa).

The tract at residues 1–26 is disordered; it reads MTVATGDPADEAAALPGHPQDTYDPE. The interval 1 to 125 is tetramerization domain; sequence MTVATGDPAD…YELGEEAMEM (125 aa). Residues 1 to 160 lie on the Cytoplasmic side of the membrane; the sequence is MTVATGDPAD…LLFEYPESSG (160 aa). The chain crosses the membrane as a helical span at residues 161 to 182; sequence PARIIAIVSVMVILISIVSFCL. The Extracellular segment spans residues 183–221; the sequence is ETLPIFRDENEDMHGSGVTFHTYSNSTIGYQQSTSFTDP. N-linked (GlcNAc...) asparagine glycosylation is present at Asn207. A helical transmembrane segment spans residues 222-243; sequence FFIVETLCIIWFSFEFLVRFFA. Cys244 carries the S-palmitoyl cysteine lipid modification. At 244–254 the chain is on the cytoplasmic side; it reads CPSKAGFFTNI. Residues 255 to 275 traverse the membrane as a helical segment; sequence MNIIDIVAIIPYFITLGTELA. Topologically, residues 276 to 289 are extracellular; that stretch reads EKPEDAQQGQQAMS. A helical; Voltage-sensor membrane pass occupies residues 290 to 310; it reads LAILRVIRLVRVFRIFKLSRH. Residues 311 to 325 lie on the Cytoplasmic side of the membrane; sequence SKGLQILGQTLKASM. The S4-S5 linker stretch occupies residues 312-325; that stretch reads KGLQILGQTLKASM. Residues 326–347 form a helical membrane-spanning segment; that stretch reads RELGLLIFFLFIGVILFSSAVY. At 348–361 the chain is on the extracellular side; sequence FAEADERESQFPSI. The segment at residues 362–373 is an intramembrane region (helical); it reads PDAFWWAVVSMT. The short motif at 374–379 is the Selectivity filter element; it reads TVGYGD. An intramembrane segment occupies 374–381; sequence TVGYGDMV. Topologically, residues 382 to 388 are extracellular; the sequence is PTTIGGK. Residues 389–417 form a helical membrane-spanning segment; the sequence is IVGSLCAIAGVLTIALPVPVIVSNFNYFY. At 418–499 the chain is on the cytoplasmic side; that stretch reads HRETEGEEQA…VNITKMLTDV (82 aa). Tyr429 carries the phosphotyrosine modification. A phosphoserine mark is found at Ser434, Ser440, Ser441, and Ser449. Tyr458 carries the phosphotyrosine modification. Ser468 is subject to Phosphoserine. Positions 497-499 match the PDZ-binding motif; that stretch reads TDV.

Belongs to the potassium channel family. A (Shaker) (TC 1.A.1.2) subfamily. Kv1.2/KCNA2 sub-subfamily. Homotetramer and heterotetramer with other channel-forming alpha subunits, such as KCNA1, KCNA4, KCNA5, KCNA6 and KCNA7. Channel activity is regulated by interaction with the beta subunits, including KCNAB1 and KCNAB2. Identified in a complex with KCNA1 and KCNAB2. Identified in a complex with KCNA5 and KCNAB1. Identified in a complex with KCNA4 and FYN. Interacts with the beta subunit KCNAB1. Interacts with PTK2B. Interacts (via C-terminus) with CTTN. Interacts (via N-terminal cytoplasmic domain) with RHOA (GTP-bound form); this regulates channel activity by reducing location at the cell surface in response to CHRM1 activation. Interacts with DRD2. Interacts with SIGMAR1; cocaine consumption leads to increased interaction. Interacts with ADAM22. Interacts (via C-terminus) with the PDZ domains of DLG1, DLG2 and DLG4. Interacts with CNTNAP2. Interacts with ADAM11. Interacts with LYNX1. Post-translationally, phosphorylated on tyrosine residues; phosphorylation increases in response to ischemia. Phosphorylated on tyrosine residues by activated PTK2B/PYK2. Phosphorylation on tyrosine residues suppresses ion channel activity. Phosphorylated on tyrosine residues in response to CHRM1 activation; this abolishes interaction with CTTN. This is probably due to endocytosis of the phosphorylated channel subunits. Phosphorylated on serine residues in response to increased cAMP levels; phosphorylation is apparently not catalyzed by PKA. In terms of processing, N-glycosylated, with complex, sialylated N-glycans. Detected in brain cortex. Detected in peroneal nerve in the juxtaparanodal regions of the node of Ranvier; expression is decreased in patients with diabetes mellitus that suffer from axonal neuropathy. Detected in paranodal and juxtanodal zones in myelinated spinal cord (at protein level).

Its subcellular location is the cell membrane. It is found in the membrane. The protein localises to the cell projection. The protein resides in the axon. It localises to the synapse. Its subcellular location is the endoplasmic reticulum membrane. It is found in the lamellipodium membrane. The protein localises to the synaptosome. The protein resides in the presynaptic cell membrane. It localises to the dendrite. Its subcellular location is the cell junction. It is found in the paranodal septate junction. The catalysed reaction is K(+)(in) = K(+)(out). Inhibited by 4-aminopyridine (4-AP) and charybdotoxin (CTX), but not by tetraethylammonium (TEA). Inhibited by dendrotoxin (DTX). Inhibited by tityustoxin-K alpha (TsTX-Kalpha), a toxin that is highly specific for KCNA2. Inhibited by maurotoxin. Inhibited by kappaM conotoxins kappaM-RIIIJ and kappaM-RIIIK; kappaM-RIIIJ has much higher affinity for channels containing KCNA2 than kappaM-RIIIK, with the exception of heterodimers formed by KCNA2 and KCNA7 where the opposite is true. Voltage-gated potassium channel that mediates transmembrane potassium transport in excitable membranes, primarily in the brain and the central nervous system, but also in the cardiovascular system. Prevents aberrant action potential firing and regulates neuronal output. Forms tetrameric potassium-selective channels through which potassium ions pass in accordance with their electrochemical gradient. The channel alternates between opened and closed conformations in response to the voltage difference across the membrane. Can form functional homotetrameric channels and heterotetrameric channels that contain variable proportions of KCNA1, KCNA2, KCNA4, KCNA5, KCNA6, KCNA7, and possibly other family members as well; channel properties depend on the type of alpha subunits that are part of the channel. Channel properties are modulated by cytoplasmic beta subunits that regulate the subcellular location of the alpha subunits and promote rapid inactivation of delayed rectifier potassium channels. In vivo, membranes probably contain a mixture of heteromeric potassium channel complexes, making it difficult to assign currents observed in intact tissues to any particular potassium channel family member. Homotetrameric KCNA2 forms a delayed-rectifier potassium channel that opens in response to membrane depolarization, followed by slow spontaneous channel closure. In contrast, a heteromultimer formed by KCNA2 and KCNA4 shows rapid inactivation. Regulates neuronal excitability and plays a role as pacemaker in the regulation of neuronal action potentials. KCNA2-containing channels play a presynaptic role and prevent hyperexcitability and aberrant action potential firing. Response to toxins that are selective for KCNA2-containing potassium channels suggests that in Purkinje cells, dendritic subthreshold KCNA2-containing potassium channels prevent random spontaneous calcium spikes, suppressing dendritic hyperexcitability without hindering the generation of somatic action potentials, and thereby play an important role in motor coordination. Plays a role in the induction of long-term potentiation of neuron excitability in the CA3 layer of the hippocampus. May function as down-stream effector for G protein-coupled receptors and inhibit GABAergic inputs to basolateral amygdala neurons. May contribute to the regulation of neurotransmitter release, such as gamma-aminobutyric acid (GABA). Contributes to the regulation of the axonal release of the neurotransmitter dopamine. Reduced KCNA2 expression plays a role in the perception of neuropathic pain after peripheral nerve injury, but not acute pain. Plays a role in the regulation of the time spent in non-rapid eye movement (NREM) sleep. The protein is Potassium voltage-gated channel subfamily A member 2 (KCNA2) of Homo sapiens (Human).